A 363-amino-acid chain; its full sequence is MGLIFFRYDRCYMLSVLSYLHVYFGPFRLLQSYAVLMGIALYAGFFFTYGVLPSAYRFLPQDRGRAFAPCAQEAAGKPTGAGVIFVSVFVLLVYLLMRPSFVHALILLLTWGVMLTGYLDDCAQVCWGEYRKGALDFLFAVLTAALLGHFYFHDQVFWWFPFFSDPVFVSPFLFFAGSVVILWMSINATNCTDGVDGLSGALVLMALLSMGTIFYFLLGNVRAAQYLLVPFVVDGAQWALMSFALAGALMGYVWRNAHPSTVLMGDAGSRALGFFIGVLVLISGNPFLLLMTSGVILVNGGTGLLKVVLLRFFHVRILSRVRFPLHDHMRENWHWSTAQVLLRFMILQGLLTIGLLGVLFKLR.

The next 10 membrane-spanning stretches (helical) occupy residues 33 to 53 (YAVL…GVLP), 82 to 102 (GVIF…PSFV), 105 to 125 (LILL…CAQV), 133 to 153 (GALD…FYFH), 166 to 186 (PVFV…WMSI), 198 to 218 (LSGA…YFLL), 227 to 247 (LLVP…ALAG), 271 to 291 (ALGF…LLLM), 295 to 315 (VILV…FFHV), and 340 to 360 (VLLR…GVLF).

It belongs to the glycosyltransferase 4 family. MraY subfamily. The cofactor is Mg(2+).

It localises to the cell inner membrane. It carries out the reaction UDP-N-acetyl-alpha-D-muramoyl-L-alanyl-gamma-D-glutamyl-meso-2,6-diaminopimeloyl-D-alanyl-D-alanine + di-trans,octa-cis-undecaprenyl phosphate = di-trans,octa-cis-undecaprenyl diphospho-N-acetyl-alpha-D-muramoyl-L-alanyl-D-glutamyl-meso-2,6-diaminopimeloyl-D-alanyl-D-alanine + UMP. Its pathway is cell wall biogenesis; peptidoglycan biosynthesis. In terms of biological role, catalyzes the initial step of the lipid cycle reactions in the biosynthesis of the cell wall peptidoglycan: transfers peptidoglycan precursor phospho-MurNAc-pentapeptide from UDP-MurNAc-pentapeptide onto the lipid carrier undecaprenyl phosphate, yielding undecaprenyl-pyrophosphoryl-MurNAc-pentapeptide, known as lipid I. The sequence is that of Phospho-N-acetylmuramoyl-pentapeptide-transferase from Treponema pallidum (strain Nichols).